The primary structure comprises 354 residues: Membrane progestin receptor beta (354 aa).

Over 1-76 (MTTAILERLS…FSLFQKHNEV (76 aa)) the chain is Cytoplasmic. Residues 77–97 (VNVWTHLLAALAVLLRFWAFV) form a helical membrane-spanning segment. Over 98–111 (EAGALQWASPHTLP) the chain is Extracellular. The helical transmembrane segment at 112–132 (LLLFILSSITYLTCSLLAHLL) threads the bilayer. Residues 133–173 (QSKSELSHYTFYFVDYVGVSVYQYGSALAHFFYSSDQAWYE) are Cytoplasmic-facing. Residues 174-194 (LFWIFFLPAAAFCGWLSCAGC) traverse the membrane as a helical segment. Over 195 to 213 (CYAKYRYRRPYPVMRKICQ) the chain is Extracellular. Residues 214-234 (VVPAGLAFVLDISPVAHRVAL) form a helical membrane-spanning segment. The Cytoplasmic portion of the chain corresponds to 235–243 (CHLAGCQEQ). Residues 244–264 (AAWYHTLQILFFLVSAYFFSC) form a helical membrane-spanning segment. The Extracellular segment spans residues 265-283 (PVPEKYFPGSCDIVGHGHQ). Residues 284 to 304 (IFHAFLSVCTLSQLEAILLDY) form a helical membrane-spanning segment. The Cytoplasmic segment spans residues 305-315 (QGRHEIFLQRH). A helical transmembrane segment spans residues 316–336 (GPLSVYSACLSFFVLAACSAA). Residues 337–354 (TATLLRHKVKDRLIKKDS) are Extracellular-facing.

It belongs to the ADIPOR family. As to expression, expressed in brain and testis.

Its subcellular location is the cell membrane. Functionally, plasma membrane progesterone (P4) receptor coupled to G proteins. Seems to act through a G(i) mediated pathway. May be involved in oocyte maturation. Also binds dehydroepiandrosterone (DHEA), pregnanolone, pregnenolone and allopregnanolone. This is Membrane progestin receptor beta from Mus musculus (Mouse).